Consider the following 216-residue polypeptide: Ornithine decarboxylase antizyme 1 (216 aa).

It belongs to the ODC antizyme family. Interacts with ODC1 and thereby sterically blocks ODC homodimerization.

In terms of biological role, ornithine decarboxylase (ODC) antizyme protein that negatively regulates ODC activity and intracellular polyamine biosynthesis and uptake in response to increased intracellular polyamine levels. Binds to ODC monomers, inhibiting the assembly of the functional ODC homodimer, and targets the monomers for ubiquitin-independent proteolytic destruction by the 26S proteasome. This is Ornithine decarboxylase antizyme 1 (oaz1) from Xenopus laevis (African clawed frog).